Consider the following 836-residue polypeptide: Neuroligin-2 (836 aa).

The first 14 residues, 1-14 (MWLLALCLVGLAGA), serve as a signal peptide directing secretion. Over 15–678 (QRGGGGPGGG…DSRDYSTELS (664 aa)) the chain is Extracellular. 2 N-linked (GlcNAc...) asparagine glycosylation sites follow: asparagine 98 and asparagine 136. Cystine bridges form between cysteine 106/cysteine 141, cysteine 317/cysteine 328, and cysteine 487/cysteine 521. A glycan (N-linked (GlcNAc...) asparagine) is linked at asparagine 522. Positions 623-661 (PPYATRWPPRTPGPGTSGTRRPPPPATLPPESDIDLGPR) are disordered. A helical membrane pass occupies residues 679 to 699 (VTVAVGASLLFLNILAFAALY). The interval 679–699 (VTVAVGASLLFLNILAFAALY) is required for interaction with LHFPL4. Residues 700-836 (YKRDRRQELR…LPHPHSTTRV (137 aa)) lie on the Cytoplasmic side of the membrane. Disordered regions lie at residues 711 to 735 (RRLSPPGGSGSGVPGGGPLLPTAGR) and 791 to 836 (LLPS…TTRV). Serine 714 and serine 719 each carry phosphoserine. Over residues 717-728 (GGSGSGVPGGGP) the composition is skewed to gly residues. Over residues 796-819 (LGPPPPPPPPSLHPFGPFPPPPPT) the composition is skewed to pro residues. Polar residues predominate over residues 824-836 (NNTLPHPHSTTRV).

Belongs to the type-B carboxylesterase/lipase family. As to quaternary structure, interacts with neurexins NRXN1, NRXN2 and NRXN3. Interaction with neurexins is mediated by heparan sulfate glycan modification on neurexin. Interacts (via its C-terminus) with DLG4/PSD-95 (via PDZ domain 3). Interacts with PATJ. Interacts with GPHN. Interacts with MDGA1 and MDGA2. Found in a complex with MAGI2 and IGSF9B, where it interacts with MAGI2 (via WW 1, WW 2 and PDZ 2 domains). Identified in a complex of 720 kDa composed of LHFPL4, NLGN2, GABRA1, GABRB2, GABRG2 and GABRB3. Interacts with LHFPL4; leading to mutual regulation of the protein level and synaptic clustering. Interacts with GABRA1. In terms of tissue distribution, detected on hippocampus neurons, especially at inhibitory synapses. Detected in retina, in the outer and inner plexiform layer. Detected in pancreas, in islet of Langerhans beta cells (at protein level). Expressed in brain, spinal cord and dorsal root ganglion. Detected in brain, and at lower levels in pancreas islet beta cells.

The protein localises to the cell membrane. Its subcellular location is the postsynaptic cell membrane. The protein resides in the presynaptic cell membrane. Transmembrane scaffolding protein involved in cell-cell interactions via its interactions with neurexin family members. Mediates cell-cell interactions both in neurons and in other types of cells, such as Langerhans beta cells. Plays a role in synapse function and synaptic signal transmission, especially via gamma-aminobutyric acid receptors (GABA(A) receptors). Functions by recruiting and clustering synaptic proteins. Promotes clustering of postsynaptic GABRG2 and GPHN. Promotes clustering of postsynaptic LHFPL4. Modulates signaling by inhibitory synapses, and thereby plays a role in controlling the ratio of signaling by excitatory and inhibitory synapses and information processing. Required for normal signal amplitude from inhibitory synapses, but is not essential for normal signal frequency. May promote the initial formation of synapses, but is not essential for this. In vitro, triggers the de novo formation of presynaptic structures. Mediates cell-cell interactions between Langerhans beta cells and modulates insulin secretion. This is Neuroligin-2 (Nlgn2) from Rattus norvegicus (Rat).